The primary structure comprises 183 residues: Ferritin heavy chain (183 aa).

N-acetylmethionine is present on Met1. Thr2 is modified (N-acetylthreonine; in Ferritin heavy chain, N-terminally processed). The Ferritin-like diiron domain occupies 11-160 (QNYHQDSEAA…DHVTNLRKMG (150 aa)). Fe cation contacts are provided by Glu28, Glu63, His66, Glu108, and Gln142. Ser179 and Ser183 each carry phosphoserine.

This sequence belongs to the ferritin family. As to quaternary structure, oligomer of 24 subunits. There are two types of subunits: L (light) chain and H (heavy) chain. The major chain can be light or heavy, depending on the species and tissue type. In the human liver, the heavy chain is predominant. The functional molecule forms a roughly spherical shell with a diameter of 12 nm and contains a central cavity into which the insoluble mineral iron core is deposited. Interacts with NCOA4; NCOA4 promotes targeting of the iron-binding ferritin complex to autolysosomes following starvation or iron depletion. As to expression, expressed in the liver.

It localises to the cytoplasm. The protein localises to the lysosome. Its subcellular location is the cytoplasmic vesicle. The protein resides in the autophagosome. It catalyses the reaction 4 Fe(2+) + O2 + 4 H(+) = 4 Fe(3+) + 2 H2O. In terms of biological role, stores iron in a soluble, non-toxic, readily available form. Important for iron homeostasis. Has ferroxidase activity. Iron is taken up in the ferrous form and deposited as ferric hydroxides after oxidation. Also plays a role in delivery of iron to cells. Mediates iron uptake in capsule cells of the developing kidney. Delivery to lysosomes is mediated by the cargo receptor NCOA4 for autophagic degradation and release of iron. The polypeptide is Ferritin heavy chain (FTH1) (Homo sapiens (Human)).